Consider the following 84-residue polypeptide: Cytochrome b559 subunit alpha (84 aa).

Residues 22–36 (IIHSITIPALFVAGW) form a helical membrane-spanning segment. Histidine 24 is a binding site for heme.

This sequence belongs to the PsbE/PsbF family. As to quaternary structure, heterodimer of an alpha subunit and a beta subunit. PSII is composed of 1 copy each of membrane proteins PsbA, PsbB, PsbC, PsbD, PsbE, PsbF, PsbH, PsbI, PsbJ, PsbK, PsbL, PsbM, PsbT, PsbX, PsbY, PsbZ, Psb30/Ycf12, at least 3 peripheral proteins of the oxygen-evolving complex and a large number of cofactors. It forms dimeric complexes. The cofactor is heme b.

It localises to the plastid. Its subcellular location is the chloroplast thylakoid membrane. Its function is as follows. This b-type cytochrome is tightly associated with the reaction center of photosystem II (PSII). PSII is a light-driven water:plastoquinone oxidoreductase that uses light energy to abstract electrons from H(2)O, generating O(2) and a proton gradient subsequently used for ATP formation. It consists of a core antenna complex that captures photons, and an electron transfer chain that converts photonic excitation into a charge separation. The polypeptide is Cytochrome b559 subunit alpha (Guillardia theta (Cryptophyte)).